We begin with the raw amino-acid sequence, 266 residues long: Indole-3-glycerol phosphate synthase (266 aa).

This sequence belongs to the TrpC family.

It carries out the reaction 1-(2-carboxyphenylamino)-1-deoxy-D-ribulose 5-phosphate + H(+) = (1S,2R)-1-C-(indol-3-yl)glycerol 3-phosphate + CO2 + H2O. It participates in amino-acid biosynthesis; L-tryptophan biosynthesis; L-tryptophan from chorismate: step 4/5. This Janthinobacterium sp. (strain Marseille) (Minibacterium massiliensis) protein is Indole-3-glycerol phosphate synthase.